The chain runs to 656 residues: Acyl-CoA-binding domain-containing protein 6 (656 aa).

Residues 8–102 (YPDRFYAAAA…LEEEDPGWYS (95 aa)) enclose the ACB domain. An acyl-CoA contacts are provided by residues 44–48 (YGLYQ) and Lys-70. The interval 129–148 (ASTNGTSVPEPKTISENGSS) is disordered. Kelch repeat units lie at residues 194-241 (KMYI…AQVS), 254-304 (KFFS…LVGT), 305-354 (TLVL…CHAD), 356-405 (YLLI…TVGE), 406-454 (NWYI…LVHS), and 461-507 (YLIS…EPEV). Positions 527–636 (LKKDDANELL…EQAALEAKQR (110 aa)) form a coiled coil. Positions 627-656 (EQAALEAKQRQSSSGMWGWLVGTPPDKSES) are disordered.

This sequence belongs to the ACBP family. In terms of tissue distribution, highly expressed in leaves. Expressed in roots and seeds.

The protein localises to the peroxisome. Its function is as follows. Binds medium- and long-chain acyl-CoA esters with high affinity. Can interact in vitro with linoleoyl-CoA and linolenoyl-CoA. Binds phosphatidic acid (PA) and phosphatidylcholine (PC) in vitro. May play a role in the biosynthesis of phospholipids. May be involved in lipid degradation via peroxisomal beta-oxydation. In Oryza sativa subsp. japonica (Rice), this protein is Acyl-CoA-binding domain-containing protein 6.